The chain runs to 121 residues: Large ribosomal subunit protein uL18 (121 aa).

This sequence belongs to the universal ribosomal protein uL18 family. As to quaternary structure, part of the 50S ribosomal subunit; part of the 5S rRNA/L5/L18/L25 subcomplex. Contacts the 5S and 23S rRNAs.

Functionally, this is one of the proteins that bind and probably mediate the attachment of the 5S RNA into the large ribosomal subunit, where it forms part of the central protuberance. The chain is Large ribosomal subunit protein uL18 from Paraburkholderia xenovorans (strain LB400).